We begin with the raw amino-acid sequence, 124 residues long: Darcynin homolog (124 aa).

Belongs to the darcynin family.

In Granulibacter bethesdensis (strain ATCC BAA-1260 / CGDNIH1), this protein is Darcynin homolog.